The chain runs to 710 residues: MRRGSSESELAARWEAEAVAAAKAAAKAEAEATAETVAEQVRVDAGAAGEPECKAGEEQPKVLAPAPAQPSAAEEGNTQVLQRPPPTLPPSKPKPVQGLCPHGKPRDKGRSCKRSSGHGSGENGSQRPVTVDSSKARTSLDALKISIRQLKWKEFPFGRRLPCDIYWHGVSFHDNDIFSGQVNKFPGMTEMVRKITLSRAVRTMQNLFPEEYNFYPRSWILPDEFQLFVAQVQMVKDDDPSWKPTFIVKPDGGCQGDGIYLIKDPSDIRLAGTLQSRPAVVQEYICKPLLIDKLKFDIRLYVLLKSLDPLEIYIAKDGLSRFCTEPYQEPTPKNLHRIFMHLTNYSLNIHSGNFIHSDSASTGSKRTFSSILCRLSSKGVDIKKVWSDIISVVIKTVIALTPELKVFYQSDIPTGRPGPTCFQILGFDILLMKNLKPILLEVNANPSMRIEHEHELSPGVFENVPSLVDEEVKVAVIRDTLRLMDPLKKKRENQSQQLEKPFAGKEDALDGELTSAPDCNANPEAHLPSICLKQVFPKYAKQFNYLRLVDRMANLFIRFLGIKGTMKLGPTGFRTFIRSCKLSSSSLSMAAVDILYIDITRRWNSMTLDQRDSGMCLQAFVEAFFFLAQRKFKMLPLHEQVASLIDLCEYHLSLLDEKRLVCGRGVPSGGRPPHRGPPQEPSPSAQPAGDNPPPRTSCANKLSHPRHTLS.

The disordered stretch occupies residues 41–135; it reads VRVDAGAAGE…QRPVTVDSSK (95 aa). A compositionally biased stretch (basic and acidic residues) spans 51–60; that stretch reads PECKAGEEQP. Positions 64-82 are enriched in low complexity; that stretch reads APAPAQPSAAEEGNTQVLQ. Residues 83–93 are compositionally biased toward pro residues; that stretch reads RPPPTLPPSKP. Positions 123 to 135 are enriched in polar residues; sequence NGSQRPVTVDSSK. Residues 128 to 480 form the TTL domain; that stretch reads PVTVDSSKAR…EVKVAVIRDT (353 aa). Residues K249, 255-256, 282-285, and 295-297 each bind ATP; these read QG, QEYI, and KFD. Residue Q255 coordinates a protein. An L-glutamate-binding site is contributed by R321. 343-344 provides a ligand contact to ATP; sequence TN. L-glutamate is bound by residues Y345, S346, and K365. Mg(2+)-binding residues include D428, E441, and N443. The interval 467-538 is c-MTBD region; that stretch reads LVDEEVKVAV…SICLKQVFPK (72 aa). Residue K473 coordinates L-glutamate. A disordered region spans residues 665–710; that stretch reads GVPSGGRPPHRGPPQEPSPSAQPAGDNPPPRTSCANKLSHPRHTLS.

The protein belongs to the tubulin--tyrosine ligase family. Requires Mg(2+) as cofactor.

The protein localises to the cytoplasm. The protein resides in the cytoskeleton. It localises to the cilium basal body. It carries out the reaction L-glutamyl-[protein] + L-glutamate + ATP = gamma-L-glutamyl-L-glutamyl-[protein] + ADP + phosphate + H(+). It catalyses the reaction (L-glutamyl)(n)-gamma-L-glutamyl-L-glutamyl-[protein] + L-glutamate + ATP = (L-glutamyl)(n+1)-gamma-L-glutamyl-L-glutamyl-[protein] + ADP + phosphate + H(+). Functionally, polyglutamylase which modifies tubulin, generating polyglutamate side chains of variable lengths on the gamma-carboxyl group of specific glutamate residues within the C-terminal tail of tubulin. Preferentially mediates ATP-dependent polyglutamate long side-chain elongation over the initiation step of the polyglutamylation reaction. Preferentially modifies the alpha-tubulin tail over a beta-tail. Required for CCSAP localization to both spindle and cilia microtubules. Promotes tubulin polyglutamylation which stimulates spastin/SPAST-mediated microtubule severing, thereby regulating microtubule functions. This Homo sapiens (Human) protein is Tubulin polyglutamylase TTLL11.